The primary structure comprises 374 residues: DNA replication and repair protein RecF (374 aa).

Residue Gly34 to Thr41 participates in ATP binding.

This sequence belongs to the RecF family.

The protein resides in the cytoplasm. In terms of biological role, the RecF protein is involved in DNA metabolism; it is required for DNA replication and normal SOS inducibility. RecF binds preferentially to single-stranded, linear DNA. It also seems to bind ATP. This is DNA replication and repair protein RecF from Rhizobium leguminosarum bv. trifolii (strain WSM2304).